The sequence spans 502 residues: Glycerol kinase (502 aa).

Thr14 is an ADP binding site. Positions 14, 15, and 16 each coordinate ATP. Thr14 provides a ligand contact to sn-glycerol 3-phosphate. Residue Arg18 coordinates ADP. Sn-glycerol 3-phosphate-binding residues include Arg84, Glu85, Tyr136, and Asp246. Residues Arg84, Glu85, Tyr136, Asp246, and Gln247 each contribute to the glycerol site. Positions 268 and 311 each coordinate ADP. ATP contacts are provided by Thr268, Gly311, Gln315, and Gly412. 2 residues coordinate ADP: Gly412 and Asn416.

The protein belongs to the FGGY kinase family. As to quaternary structure, homotetramer and homodimer (in equilibrium). Heterodimer with EIIA-Glc. Binds 1 zinc ion per glycerol kinase EIIA-Glc dimer. The zinc ion is important for dimerization.

The enzyme catalyses glycerol + ATP = sn-glycerol 3-phosphate + ADP + H(+). The protein operates within polyol metabolism; glycerol degradation via glycerol kinase pathway; sn-glycerol 3-phosphate from glycerol: step 1/1. Activity of this regulatory enzyme is affected by several metabolites. Allosterically and non-competitively inhibited by fructose 1,6-bisphosphate (FBP) and unphosphorylated phosphocarrier protein EIIA-Glc (III-Glc), an integral component of the bacterial phosphotransferase (PTS) system. Functionally, key enzyme in the regulation of glycerol uptake and metabolism. Catalyzes the phosphorylation of glycerol to yield sn-glycerol 3-phosphate. In Shigella boydii serotype 18 (strain CDC 3083-94 / BS512), this protein is Glycerol kinase.